A 902-amino-acid polypeptide reads, in one-letter code: Auxin response factor 5 (902 aa).

A DNA-binding region (TF-B3) is located at residues 158–260 (FCKTLTASDT…QLMVGVRRAN (103 aa)). The interval 497–543 (SEMVQPQNKLTVNPSASNTSGQEQNLSQSMSAPAKPENSTLSGCSSG) is disordered. Residues 793–877 (RTYTKVQKTG…RCIRILSPTE (85 aa)) enclose the PB1 domain.

The protein belongs to the ARF family. As to quaternary structure, homodimers and heterodimers. Interacts with BRX and the auxin-responsive proteins IAA1, IAA12 (BODENLOS), IAA17 and ARF7. As to expression, expressed in the whole plant with a lower expression in leaves. Detected in embryo axis, provascular tissues, procambium and some differentiated vascular regions of mature organs.

The protein localises to the nucleus. Functionally, auxin response factors (ARFs) are transcriptional factors that bind specifically to the DNA sequence 5'-TGTCTC-3' found in the auxin-responsive promoter elements (AuxREs). Seems to act as transcriptional activator. Formation of heterodimers with Aux/IAA proteins may alter their ability to modulate early auxin response genes expression. Mediates embryo axis formation and vascular tissues differentiation. Functionally redundant with ARF7. May be necessary to counteract AMP1 activity. The protein is Auxin response factor 5 (ARF5) of Arabidopsis thaliana (Mouse-ear cress).